The sequence spans 78 residues: D-alanyl carrier protein (78 aa).

The region spanning 1-78 (MEFKQEVLDV…NIVNKLTELK (78 aa)) is the Carrier domain. Ser36 is modified (O-(pantetheine 4'-phosphoryl)serine).

Belongs to the DltC family. Post-translationally, 4'-phosphopantetheine is transferred from CoA to a specific serine of apo-DCP.

The protein resides in the cytoplasm. It functions in the pathway cell wall biogenesis; lipoteichoic acid biosynthesis. In terms of biological role, carrier protein involved in the D-alanylation of lipoteichoic acid (LTA). The loading of thioester-linked D-alanine onto DltC is catalyzed by D-alanine--D-alanyl carrier protein ligase DltA. The DltC-carried D-alanyl group is further transferred to cell membrane phosphatidylglycerol (PG) by forming an ester bond, probably catalyzed by DltD. D-alanylation of LTA plays an important role in modulating the properties of the cell wall in Gram-positive bacteria, influencing the net charge of the cell wall. This chain is D-alanyl carrier protein, found in Bacillus velezensis (strain DSM 23117 / BGSC 10A6 / LMG 26770 / FZB42) (Bacillus amyloliquefaciens subsp. plantarum).